A 364-amino-acid chain; its full sequence is MSHTTHPYQKELEVATLAVKRASLLTKQLSDSIVQTARSGTLTKDDKSPVTIGDFASQAIINHAIKLNFPSDEIVGEEDSQELQENSSLADQVLSLIIKIQQETSVYNDVVGTLTDKNKVFQSIDYGNSQGGSKGRFWALDPIDGTKGFLRGDQFAVCLALIEDGKVVLGVIGCPNLSENIVSNEEHSGVVGGLYSAVKGVGSFYSELFKEGTEPLSQQKPIKMQNHTNPSQLKVVEGVEKGHSSHSTQAEIKAKLGFDPTTVAKQTVNLDSQVKYCVLASGQADIYLRLPVSDTYREKIWDHAAGNILIYESGGQVGDVTGAPLNFGNGRTLDSKGVIAANKEIFDKVIDAVTEIRKSSTPRV.

The Proton acceptor role is filled by D54. E77, D141, I143, and D144 together coordinate Mg(2+). The active-site Proton acceptor is the T146. The adenosine 3',5'-bisphosphate site is built by T146, H243, S272, K275, R289, and D302. 5 residues coordinate AMP: H243, S272, K275, R289, and D302. D302 lines the Mg(2+) pocket.

The protein belongs to the inositol monophosphatase superfamily. The cofactor is Mg(2+).

The enzyme catalyses 3'-phosphoadenylyl sulfate + H2O = adenosine 5'-phosphosulfate + phosphate. It carries out the reaction adenosine 3',5'-bisphosphate + H2O = AMP + phosphate. It catalyses the reaction adenosine 2',5'-bisphosphate + H2O = AMP + phosphate. Functionally, phosphatase that converts adenosine 3'-phosphate 5'-phosphosulfate (PAPS) to adenosine 5'-phosphosulfate (APS) and 3'(2')-phosphoadenosine 5'-phosphate (PAP) to AMP. Regulates the flux of sulfur in the sulfur-activation pathway by converting PAPS to APS. Involved in salt tolerance. This Candida albicans (strain SC5314 / ATCC MYA-2876) (Yeast) protein is 3'(2'),5'-bisphosphate nucleotidase 1 (HAL21).